Here is a 380-residue protein sequence, read N- to C-terminus: Alpha-N-acetylneuraminate alpha-2,8-sialyltransferase ST8SIA3 (380 aa).

At 1–9 the chain is on the cytoplasmic side; sequence MRNCKMARV. Residues 10–33 traverse the membrane as a helical; Signal-anchor for type II membrane protein segment; sequence ASVLGLVMLSVALLNLSLISYVSL. At 34–380 the chain is on the lumenal side; sequence KKENIFATPK…LTKLTLSHCA (347 aa). Asn93 and Asn113 each carry an N-linked (GlcNAc...) asparagine glycan. Disulfide bonds link Cys162–Cys313 and Cys176–Cys379. Residues Asn167 and Asn190 each contribute to the CMP-N-acetyl-beta-neuraminate site. Asn206 carries N-linked (GlcNAc...) asparagine glycosylation. Positions 300, 301, 302, 322, 336, and 337 each coordinate CMP-N-acetyl-beta-neuraminate. Residue His354 is the Proton donor/acceptor of the active site.

The protein belongs to the glycosyltransferase 29 family. Homodimer. Post-translationally, autopolysialylated.

The protein resides in the golgi apparatus membrane. The enzyme catalyses [N-acetyl-alpha-D-neuraminosyl-(2-&gt;8)](n) + CMP-N-acetyl-beta-neuraminate = [N-acetyl-alpha-D-neuraminosyl-(2-&gt;8)](n+1) + CMP + H(+). It carries out the reaction alpha-Neu5Ac-(2-&gt;3)-beta-D-Gal-(1-&gt;4)-6S-D-GlcNAc + CMP-N-acetyl-beta-neuraminate = alpha-Neu5Ac-(2-&gt;8)-alpha-Neu5Ac-(2-&gt;3)-beta-D-Gal-(1-&gt;4)-6S-D-GlcNAc + CMP + H(+). It catalyses the reaction a ganglioside GM3 (d18:1(4E)) + CMP-N-acetyl-beta-neuraminate = a ganglioside GD3 (d18:1(4E)) + CMP + H(+). The catalysed reaction is a ganglioside GM3 + CMP-N-acetyl-beta-neuraminate = a ganglioside GD3 + CMP + H(+). The enzyme catalyses an N-acetyl-alpha-neuraminyl-(2-&gt;3)-beta-D-galactosyl derivative + CMP-N-acetyl-beta-neuraminate = an N-acetyl-alpha-neuraminyl-(2-&gt;8)-N-acetyl-alpha-neuraminyl-(2-&gt;3)-beta-D-galactosyl derivative + CMP + H(+). It carries out the reaction an N-acetyl-alpha-neuraminyl-(2-&gt;3)-beta-D-galactosyl-(1-&gt;4)-N-acetyl-beta-D-glucosaminyl derivative + CMP-N-acetyl-beta-neuraminate = an alpha-Neu5Ac-(2-&gt;8)-alpha-Neu5Ac-(2-&gt;3)-beta-D-Gal-(1-&gt;4)-beta-D-GlcNAc derivative + CMP + H(+). The protein operates within protein modification; protein glycosylation. Its function is as follows. Catalyzes the transfer of sialic acid from a CMP-linked sialic acid donor onto a terminal alpha-2,3-, alpha-2,6-, or alpha-2,8-linked sialic acid of an acceptor, such as N-linked oligosaccharides of glycoproteins and glycolipids through alpha-2,8-linkages. Forms oligosialic and polysialic acid on various sialylated N-acetyllactosamine oligosaccharides of glycoproteins, including FETUB N-glycans, a2-HS-glycoprotein (AHSG) and alpha 2,3-sialylated glycosphingolipids, such as alpha 2,3-sialylparagloboside and ganglioside GM3 and to a lesser extent NCAM1 N-glycans. However, it is much more specific to N-linked oligosaccharides of glycoproteins than glycosphingolipids. 2,3-sialylparagloboside serves as the best acceptor substrate among the glycolipids. alpha-Neu5Ac-(2-&gt;8)-alpha-Neu5Ac-(2-&gt;3)-beta-D-Gal-(1-&gt;4)-6S-D-GlcNAc and monosialyl and disialyl N-acetyllactosamines are the best acceptor substrates among glycoproteins. May plays critical role in the striatum by mediating the formation of disialylated and trisialylated terminal glycotopes on N- and O-glycans of specific striatal proteins, regulating their distribution in lipid rafts, affecting their interaction with other binding partners, and subsequently modulating striatal functions. The protein is Alpha-N-acetylneuraminate alpha-2,8-sialyltransferase ST8SIA3 of Pan troglodytes (Chimpanzee).